Consider the following 824-residue polypeptide: Leucine--tRNA ligase (824 aa).

The 'HIGH' region signature appears at 42–52 (PYPSGRIHMGH). A 'KMSKS' region motif is present at residues 581 to 585 (KMSKS). An ATP-binding site is contributed by lysine 584.

This sequence belongs to the class-I aminoacyl-tRNA synthetase family.

The protein resides in the cytoplasm. It carries out the reaction tRNA(Leu) + L-leucine + ATP = L-leucyl-tRNA(Leu) + AMP + diphosphate. The polypeptide is Leucine--tRNA ligase (Geotalea daltonii (strain DSM 22248 / JCM 15807 / FRC-32) (Geobacter daltonii)).